The sequence spans 192 residues: Fe/S biogenesis protein NfuA (192 aa).

Residues cysteine 149 and cysteine 152 each contribute to the [4Fe-4S] cluster site.

The protein belongs to the NfuA family. In terms of assembly, homodimer. It depends on [4Fe-4S] cluster as a cofactor.

Its function is as follows. Involved in iron-sulfur cluster biogenesis. Binds a 4Fe-4S cluster, can transfer this cluster to apoproteins, and thereby intervenes in the maturation of Fe/S proteins. Could also act as a scaffold/chaperone for damaged Fe/S proteins. The polypeptide is Fe/S biogenesis protein NfuA (Colwellia psychrerythraea (strain 34H / ATCC BAA-681) (Vibrio psychroerythus)).